The primary structure comprises 841 residues: pre-rRNA 2'-O-ribose RNA methyltransferase FTSJ3 (841 aa).

S-adenosyl-L-methionine-binding residues include G56, W58, D76, D92, and D117. K157 serves as the catalytic Proton acceptor. The tract at residues 332 to 366 is disordered; the sequence is ISLSSGEEDEGNEEDSTAGTTEQPSKEEEEEEQLN. Phosphoserine is present on residues S333, S335, S336, S347, and S356. Residues 337 to 347 are compositionally biased toward acidic residues; the sequence is GEEDEGNEEDS. A coiled-coil region spans residues 356-404; the sequence is SKEEEEEEQLNQTLAEMKAQEVAELKRKKKKLLREQRKQRERVELKMDL. K357 participates in a covalent cross-link: Glycyl lysine isopeptide (Lys-Gly) (interchain with G-Cter in SUMO2). A Citrulline modification is found at R389. Positions 454–482 are disordered; it reads VSDVEDDGDDTSLDSDLDPEELAGVRGHQ. A compositionally biased stretch (acidic residues) spans 456-474; sequence DVEDDGDDTSLDSDLDPEE. S547 is modified (phosphoserine). Position 567 is a phosphothreonine (T567). Residue K573 forms a Glycyl lysine isopeptide (Lys-Gly) (interchain with G-Cter in SUMO2) linkage. Residue S578 is modified to Phosphoserine. The disordered stretch occupies residues 579 to 654; it reads PLYQDEAPKG…IVPIEDPAKH (76 aa). K637 participates in a covalent cross-link: Glycyl lysine isopeptide (Lys-Gly) (interchain with G-Cter in SUMO2). Position 638 is a phosphoserine (S638). A Glycyl lysine isopeptide (Lys-Gly) (interchain with G-Cter in SUMO2) cross-link involves residue K653. At S670 the chain carries Phosphoserine. Residue K672 forms a Glycyl lysine isopeptide (Lys-Gly) (interchain with G-Cter in SUMO2) linkage. S682 is modified (phosphoserine). K704 participates in a covalent cross-link: Glycyl lysine isopeptide (Lys-Gly) (interchain with G-Cter in SUMO2). Residues 733 to 771 are a coiled coil; the sequence is IKKVAEAKARKKRRMLKRLEQTRKKAEAVVNTVDISERE. Position 777 is a citrulline (R777). Basic residues predominate over residues 805–815; the sequence is VRRPAGVRGHF. Residues 805–841 are disordered; it reads VRRPAGVRGHFKVVDSRMKKDQRAQQRKEQKKKHKRK. Over residues 816-832 the composition is skewed to basic and acidic residues; it reads KVVDSRMKKDQRAQQRK.

The protein belongs to the class I-like SAM-binding methyltransferase superfamily. RNA methyltransferase RlmE family. SPB1 subfamily. In terms of assembly, interacts with NIP7. Post-translationally, citrullinated by PADI4.

The protein localises to the nucleus. It localises to the nucleolus. The enzyme catalyses a ribonucleotide in rRNA + S-adenosyl-L-methionine = a 2'-O-methylribonucleotide in rRNA + S-adenosyl-L-homocysteine + H(+). Functionally, RNA 2'-O-methyltransferase involved in the processing of the 34S pre-rRNA to 18S rRNA and in 40S ribosomal subunit formation. The chain is pre-rRNA 2'-O-ribose RNA methyltransferase FTSJ3 from Pongo abelii (Sumatran orangutan).